We begin with the raw amino-acid sequence, 351 residues long: Palmitoyltransferase spe-10 (351 aa).

Transmembrane regions (helical) follow at residues 21–43, 60–80, 198–218, and 241–261; these read TGWI…LWWS, IQAT…MWSL, YFLL…LTSL, and LFSF…LIIF. Residues 154 to 204 enclose the DHHC domain; it reads KYCYECGHIKPDRARHCSSCGKCCIKYDHHCPWINMCVTHVNYKYFLLYII.

The protein belongs to the DHHC palmitoyltransferase family. In terms of tissue distribution, expressed during spermatogenesis in budding and budded spermatids.

Its subcellular location is the membrane. The enzyme catalyses L-cysteinyl-[protein] + hexadecanoyl-CoA = S-hexadecanoyl-L-cysteinyl-[protein] + CoA. Functionally, involved in spermatogenesis, specifically in the morphogenesis of fibrous body-membranous organelles (FB-MO), which are Golgi-derived organelles used for transporting sperm-specific components, in spermatocytes and in their localization into budding spermatids. Required for the proper formation of spermatids and spermatozoa. The polypeptide is Palmitoyltransferase spe-10 (Caenorhabditis elegans).